Consider the following 352-residue polypeptide: 4-hydroxy-2-oxovalerate aldolase 4 (352 aa).

Positions 9 to 261 (IRVTDSSLRD…RTGIDTLKII (253 aa)) constitute a Pyruvate carboxyltransferase domain. 17 to 18 (RD) is a binding site for substrate. Aspartate 18 contributes to the Mn(2+) binding site. Histidine 21 (proton acceptor) is an active-site residue. Substrate contacts are provided by serine 171 and histidine 200. Histidine 200 and histidine 202 together coordinate Mn(2+). Tyrosine 291 contacts substrate.

The protein belongs to the 4-hydroxy-2-oxovalerate aldolase family.

The catalysed reaction is (S)-4-hydroxy-2-oxopentanoate = acetaldehyde + pyruvate. The polypeptide is 4-hydroxy-2-oxovalerate aldolase 4 (Rhodococcus jostii (strain RHA1)).